A 342-amino-acid chain; its full sequence is Methylthioribose-1-phosphate isomerase (342 aa).

Substrate is bound by residues 49–51 (RGA), arginine 86, and glutamine 187. Residue aspartate 228 is the Proton donor of the active site. Position 238–239 (238–239 (NK)) interacts with substrate.

It belongs to the eIF-2B alpha/beta/delta subunits family. MtnA subfamily.

The catalysed reaction is 5-(methylsulfanyl)-alpha-D-ribose 1-phosphate = 5-(methylsulfanyl)-D-ribulose 1-phosphate. The protein operates within amino-acid biosynthesis; L-methionine biosynthesis via salvage pathway; L-methionine from S-methyl-5-thio-alpha-D-ribose 1-phosphate: step 1/6. Its function is as follows. Catalyzes the interconversion of methylthioribose-1-phosphate (MTR-1-P) into methylthioribulose-1-phosphate (MTRu-1-P). In Klebsiella pneumoniae subsp. pneumoniae (strain ATCC 700721 / MGH 78578), this protein is Methylthioribose-1-phosphate isomerase.